The chain runs to 513 residues: 2,3-bisphosphoglycerate-independent phosphoglycerate mutase (513 aa).

Asp12 and Ser62 together coordinate Mn(2+). Ser62 acts as the Phosphoserine intermediate in catalysis. Substrate contacts are provided by residues His123, Arg153 to Asp154, Arg185, Arg191, Arg261 to Arg264, and Lys335. Asp402, His406, Asp443, His444, and His462 together coordinate Mn(2+).

Belongs to the BPG-independent phosphoglycerate mutase family. As to quaternary structure, monomer. Mn(2+) is required as a cofactor.

It catalyses the reaction (2R)-2-phosphoglycerate = (2R)-3-phosphoglycerate. It participates in carbohydrate degradation; glycolysis; pyruvate from D-glyceraldehyde 3-phosphate: step 3/5. Its function is as follows. Catalyzes the interconversion of 2-phosphoglycerate and 3-phosphoglycerate. The protein is 2,3-bisphosphoglycerate-independent phosphoglycerate mutase of Thiobacillus denitrificans (strain ATCC 25259 / T1).